The following is a 472-amino-acid chain: Inhibitor of Apoptosis OPG037 (472 aa).

ANK repeat units follow at residues 97 to 126 (DGNY…DPNA), 130 to 161 (HNKT…KINN), 233 to 263 (DGNT…DVNK), 267 to 297 (FGDS…VITD), 322 to 351 (YDST…ICED), and 353 to 377 (MYYA…SVDS).

Belongs to the orthopoxvirus OPG037 protein family. As to quaternary structure, may interact with host caspase-9-Apaf-1 complex.

It localises to the host cytoplasm. Functionally, inhibits host apoptosis. Acts by associating with host apoptosome. The chain is Inhibitor of Apoptosis OPG037 (OPG037) from Homo sapiens (Human).